Consider the following 182-residue polypeptide: tRNA-splicing endonuclease (182 aa).

Catalysis depends on residues Y119, H127, and K158.

Belongs to the tRNA-intron endonuclease family. Archaeal short subfamily. As to quaternary structure, homotetramer; although the tetramer contains four active sites, only two participate in the cleavage. Therefore, it should be considered as a dimer of dimers.

The enzyme catalyses pretRNA = a 3'-half-tRNA molecule with a 5'-OH end + a 5'-half-tRNA molecule with a 2',3'-cyclic phosphate end + an intron with a 2',3'-cyclic phosphate and a 5'-hydroxyl terminus.. In terms of biological role, endonuclease that removes tRNA introns. Cleaves pre-tRNA at the 5'- and 3'-splice sites to release the intron. The products are an intron and two tRNA half-molecules bearing 2',3' cyclic phosphate and 5'-OH termini. Recognizes a pseudosymmetric substrate in which 2 bulged loops of 3 bases are separated by a stem of 4 bp. The polypeptide is tRNA-splicing endonuclease (Saccharolobus islandicus (strain Y.N.15.51 / Yellowstone #2) (Sulfolobus islandicus)).